The chain runs to 89 residues: UPF0298 protein GK1096 (89 aa).

Belongs to the UPF0298 family.

It is found in the cytoplasm. The protein is UPF0298 protein GK1096 of Geobacillus kaustophilus (strain HTA426).